Here is a 307-residue protein sequence, read N- to C-terminus: NAD kinase 1 (307 aa).

Residue aspartate 67 is the Proton acceptor of the active site. NAD(+) contacts are provided by residues 67-68 (DG), 149-150 (ND), arginine 179, and aspartate 181.

The protein belongs to the NAD kinase family. Requires a divalent metal cation as cofactor.

It localises to the cytoplasm. The catalysed reaction is NAD(+) + ATP = ADP + NADP(+) + H(+). Involved in the regulation of the intracellular balance of NAD and NADP, and is a key enzyme in the biosynthesis of NADP. Catalyzes specifically the phosphorylation on 2'-hydroxyl of the adenosine moiety of NAD to yield NADP. This chain is NAD kinase 1, found in Prochlorococcus marinus (strain SARG / CCMP1375 / SS120).